Reading from the N-terminus, the 192-residue chain is Holliday junction branch migration complex subunit RuvA (192 aa).

The tract at residues 1–64 (MIGRLTGILA…EDGHYLYGFL (64 aa)) is domain I. The tract at residues 65–143 (TEAERFAFRQ…DATGVSLHPA (79 aa)) is domain II. The segment at 144 to 149 (VDDSKQ) is flexible linker. Residues 149–192 (QDISNALLALGYNEKEAASAMKQLPADVSTSDGIRAALKLLSKV) form a domain III region.

Belongs to the RuvA family. In terms of assembly, homotetramer. Forms an RuvA(8)-RuvB(12)-Holliday junction (HJ) complex. HJ DNA is sandwiched between 2 RuvA tetramers; dsDNA enters through RuvA and exits via RuvB. An RuvB hexamer assembles on each DNA strand where it exits the tetramer. Each RuvB hexamer is contacted by two RuvA subunits (via domain III) on 2 adjacent RuvB subunits; this complex drives branch migration. In the full resolvosome a probable DNA-RuvA(4)-RuvB(12)-RuvC(2) complex forms which resolves the HJ.

The protein resides in the cytoplasm. Its function is as follows. The RuvA-RuvB-RuvC complex processes Holliday junction (HJ) DNA during genetic recombination and DNA repair, while the RuvA-RuvB complex plays an important role in the rescue of blocked DNA replication forks via replication fork reversal (RFR). RuvA specifically binds to HJ cruciform DNA, conferring on it an open structure. The RuvB hexamer acts as an ATP-dependent pump, pulling dsDNA into and through the RuvAB complex. HJ branch migration allows RuvC to scan DNA until it finds its consensus sequence, where it cleaves and resolves the cruciform DNA. The polypeptide is Holliday junction branch migration complex subunit RuvA (Dechloromonas aromatica (strain RCB)).